The sequence spans 25 residues: VLYQAVNVFSMDVIDVNSAAPKTCD.

Homodimer. N-glycosylated.

In terms of biological role, D-galactose specific lectin. Binds in decreasing order of affinity: melibiose, N-acetyllactosamine, D-galacturonic acid, D-galactose, methyl-alpha-D-galactoside, D-galactose, methyl-alpha-D-galactopyranoside, methyl-beta-D-galactopyranoside and lactose. Binds also the glycoproteins globotriose, asialofetuin and mucin. Possesses glycan-dependent cytotoxic activity against Burkitt's lymphoma Raji cells and erythroleukemia K562 cells. Has calcium-independent hemagglutinating activity towards human erythrocytes. The sequence is that of Galactose-binding lectin-2 from Aplysia kurodai (Kuroda's sea hare).